The following is a 406-amino-acid chain: Cysteine desulfurase (406 aa).

An N6-(pyridoxal phosphate)lysine modification is found at Lys-226. Cys-364 serves as the catalytic Cysteine persulfide intermediate.

It belongs to the class-V pyridoxal-phosphate-dependent aminotransferase family. Csd subfamily. Homodimer. Interacts with SufE and the SufBCD complex composed of SufB, SufC and SufD. The interaction with SufE is required to mediate the direct transfer of the sulfur atom from the S-sulfanylcysteine. Pyridoxal 5'-phosphate serves as cofactor.

It is found in the cytoplasm. It catalyses the reaction (sulfur carrier)-H + L-cysteine = (sulfur carrier)-SH + L-alanine. It carries out the reaction L-selenocysteine + AH2 = hydrogenselenide + L-alanine + A + H(+). It participates in cofactor biosynthesis; iron-sulfur cluster biosynthesis. Cysteine desulfurases mobilize the sulfur from L-cysteine to yield L-alanine, an essential step in sulfur metabolism for biosynthesis of a variety of sulfur-containing biomolecules. Component of the suf operon, which is activated and required under specific conditions such as oxidative stress and iron limitation. Acts as a potent selenocysteine lyase in vitro, that mobilizes selenium from L-selenocysteine. Selenocysteine lyase activity is however unsure in vivo. This chain is Cysteine desulfurase, found in Escherichia coli O7:K1 (strain IAI39 / ExPEC).